The chain runs to 449 residues: Malonyl-CoA:anthocyanidin 5-O-glucoside-6''-O-malonyltransferase (449 aa).

Met-1 carries the post-translational modification N-acetylmethionine. Residues His-162 and Asp-394 each act as proton acceptor in the active site.

The protein belongs to the plant acyltransferase family. As to expression, expressed in flowers. Detected in leaves, stems, roots and siliques.

It carries out the reaction anthocyanin A3 + malonyl-CoA = anthocyanin A5 + CoA. The catalysed reaction is anthocyanin A7 + malonyl-CoA = anthocyanin A9 + CoA. It catalyses the reaction anthocyanin A6 + malonyl-CoA = anthocyanin A8 + CoA. The enzyme catalyses anthocyanin A10 + malonyl-CoA = anthocyanin A11 + CoA. Functionally, catalyzes the malonylation of the 5-O-glucose residue of anthocyanins, using malonyl-CoA as the malonyl donor. Acts only on anthocyanin substrates containing a 5-O-glucosyl moiety. Acts on the four native A.thaliana anthocyanins, A3, A7, and to a lesser extent, A6 and A10. Can also use the non-native anthocyanin compounds cyanin (cyanidin 3,5-diglucoside), malvin, pelargonidin 3,5-diglucoside, peonidin 3,5-diglucoside, cyanidin 3-coumaroylglucoside 5-glucoside, delphinidin 3-coumaroylrutinoside 5-glucoside and petunidin 3-coumaroylrutinoside 5-glucoside as substrates. Is the sole enzyme responsible for producing malonylated anthocyanin 5-O-glucosides in A.thaliana. Is not able to catalyze acyl transfer using acetyl-CoA, butyryl-CoA, hexanoyl-CoA, benzoyl-CoA, cinnamoyl-CoA, methylmalonyl-CoA, succinyl-CoA, p-coumaroyl-CoA or caffeoyl-CoA. The chain is Malonyl-CoA:anthocyanidin 5-O-glucoside-6''-O-malonyltransferase (5MAT) from Arabidopsis thaliana (Mouse-ear cress).